We begin with the raw amino-acid sequence, 184 residues long: MQFTSISNSLTSTAAIGLSFTTSTTTTATFTTNTTTTITSGFTVNQNQLLSRGFENLVPYTSTVSVVATPVMTYGHLEGLINEWNLELEDQEKYFLLQATQVNAWDHTLIENGEMIRILHGEVNKVKLDQKRLEQELDFILSQQQELEFLLTYLEESTRDQSGLHYLQDADEEHVEISTRSAEF.

A coiled-coil region spans residues 117-151; that stretch reads RILHGEVNKVKLDQKRLEQELDFILSQQQELEFLL.

This sequence belongs to the nucleoporin NSP1/NUP62 family.

The polypeptide is Nucleoporin-62 C-terminal-like protein (NUP62CL) (Homo sapiens (Human)).